A 302-amino-acid chain; its full sequence is Sulfate adenylyltransferase subunit 2 (302 aa).

It belongs to the PAPS reductase family. CysD subfamily. In terms of assembly, heterodimer composed of CysD, the smaller subunit, and CysN.

It carries out the reaction sulfate + ATP + H(+) = adenosine 5'-phosphosulfate + diphosphate. The protein operates within sulfur metabolism; hydrogen sulfide biosynthesis; sulfite from sulfate: step 1/3. With CysN forms the ATP sulfurylase (ATPS) that catalyzes the adenylation of sulfate producing adenosine 5'-phosphosulfate (APS) and diphosphate, the first enzymatic step in sulfur assimilation pathway. APS synthesis involves the formation of a high-energy phosphoric-sulfuric acid anhydride bond driven by GTP hydrolysis by CysN coupled to ATP hydrolysis by CysD. The chain is Sulfate adenylyltransferase subunit 2 from Escherichia coli O81 (strain ED1a).